The primary structure comprises 327 residues: Cytochrome P450 2C42 (327 aa).

A heme-binding site is contributed by Cys-272.

The protein belongs to the cytochrome P450 family. The cofactor is heme.

The protein localises to the endoplasmic reticulum membrane. Its subcellular location is the microsome membrane. The enzyme catalyses an organic molecule + reduced [NADPH--hemoprotein reductase] + O2 = an alcohol + oxidized [NADPH--hemoprotein reductase] + H2O + H(+). Its function is as follows. Cytochromes P450 are a group of heme-thiolate monooxygenases. In liver microsomes, this enzyme is involved in an NADPH-dependent electron transport pathway. It oxidizes a variety of structurally unrelated compounds, including steroids, fatty acids, and xenobiotics. This chain is Cytochrome P450 2C42 (CYP2C42), found in Sus scrofa (Pig).